Here is a 597-residue protein sequence, read N- to C-terminus: Gamma-terpinene synthase, chloroplastic (597 aa).

The transit peptide at 1 to 47 (MATLSMQVSILNKQLKNLNSFGMRASKLPLVARRVDVSTTRLRPICS) directs the protein to the chloroplast. Asp-350 and Asp-354 together coordinate Mn(2+). A DDXXD motif motif is present at residues 350–354 (DDVYD). Homodimerization stretches follow at residues 356–362 (YGTLDEL) and 428–464 (EAKWYYAGYTPTLAEYLENAKVSISSPTIISQVYFTL). The Mn(2+) site is built by Asp-494 and Glu-502.

This sequence belongs to the terpene synthase family. In terms of assembly, homodimer. Mn(2+) serves as cofactor. Mg(2+) is required as a cofactor.

Its subcellular location is the plastid. It is found in the chloroplast. The catalysed reaction is (2E)-geranyl diphosphate = gamma-terpinene + diphosphate. The protein operates within secondary metabolite biosynthesis; terpenoid biosynthesis. Involved in the biosynthesis of phenolic monoterpenes natural products thymol and carvacrol which have a broad range of biological activities acting as antimicrobial compounds, insecticides, antioxidants and pharmaceutical agents. Monoterpene synthase which catalyzes the conversion of geranyl diphosphate (GPP) to gamma-terpinene and minor amounts of other monoterpenes (e.g. alpha-thujene, alpha-terpinene, myrcene, sabinene, (+)-R-limonene, alpha-pinene and alpha-phellandrene). The polypeptide is Gamma-terpinene synthase, chloroplastic (Thymus caespititius (Cretan thyme)).